The primary structure comprises 388 residues: S-adenosylmethionine synthase (388 aa).

His16 lines the ATP pocket. A Mg(2+)-binding site is contributed by Asp18. Glu44 provides a ligand contact to K(+). Residues Glu57 and Gln100 each contribute to the L-methionine site. The flexible loop stretch occupies residues 100-110; the sequence is QSPEIAQGVDR. ATP is bound by residues 165–167, Asp240, 246–247, Ala263, and Lys267; these read DAK and RK. Asp240 is an L-methionine binding site. Lys271 lines the L-methionine pocket.

Belongs to the AdoMet synthase family. In terms of assembly, homotetramer; dimer of dimers. Requires Mg(2+) as cofactor. The cofactor is K(+).

Its subcellular location is the cytoplasm. The catalysed reaction is L-methionine + ATP + H2O = S-adenosyl-L-methionine + phosphate + diphosphate. It participates in amino-acid biosynthesis; S-adenosyl-L-methionine biosynthesis; S-adenosyl-L-methionine from L-methionine: step 1/1. Functionally, catalyzes the formation of S-adenosylmethionine (AdoMet) from methionine and ATP. The overall synthetic reaction is composed of two sequential steps, AdoMet formation and the subsequent tripolyphosphate hydrolysis which occurs prior to release of AdoMet from the enzyme. In Acinetobacter baumannii (strain ACICU), this protein is S-adenosylmethionine synthase.